Here is a 623-residue protein sequence, read N- to C-terminus: Putative ABC transporter ATP-binding protein MG014 homolog (623 aa).

The region spanning leucine 16–serine 325 is the ABC transmembrane type-1 domain. The next 6 helical transmembrane spans lie at isoleucine 27–isoleucine 47, valine 86–isoleucine 106, phenylalanine 157–alanine 177, serine 180–leucine 200, asparagine 266–phenylalanine 286, and isoleucine 307–threonine 327. Residues leucine 365–alanine 611 form the ABC transporter domain. Residue glycine 400–serine 407 participates in ATP binding.

The protein belongs to the ABC transporter superfamily.

It localises to the cell membrane. The protein is Putative ABC transporter ATP-binding protein MG014 homolog of Mycoplasma pneumoniae (strain ATCC 29342 / M129 / Subtype 1) (Mycoplasmoides pneumoniae).